Here is a 348-residue protein sequence, read N- to C-terminus: Anthranilate phosphoribosyltransferase (348 aa).

5-phospho-alpha-D-ribose 1-diphosphate is bound by residues G80, 83-84, T88, 90-93, 108-116, and S120; these read GD, NVST, and KHGNRSVSS. G80 is a binding site for anthranilate. S92 contacts Mg(2+). N111 is an anthranilate binding site. R166 is a binding site for anthranilate. 2 residues coordinate Mg(2+): D224 and E225.

Belongs to the anthranilate phosphoribosyltransferase family. Homodimer. Requires Mg(2+) as cofactor.

It carries out the reaction N-(5-phospho-beta-D-ribosyl)anthranilate + diphosphate = 5-phospho-alpha-D-ribose 1-diphosphate + anthranilate. The protein operates within amino-acid biosynthesis; L-tryptophan biosynthesis; L-tryptophan from chorismate: step 2/5. Functionally, catalyzes the transfer of the phosphoribosyl group of 5-phosphorylribose-1-pyrophosphate (PRPP) to anthranilate to yield N-(5'-phosphoribosyl)-anthranilate (PRA). In Sorangium cellulosum (strain So ce56) (Polyangium cellulosum (strain So ce56)), this protein is Anthranilate phosphoribosyltransferase.